Consider the following 149-residue polypeptide: Small ribosomal subunit protein uS13 (149 aa).

The interval 118 to 149 (GRRHELGLPVRGQRTKSTFRKGSSVGVRRKKR) is disordered.

This sequence belongs to the universal ribosomal protein uS13 family. In terms of assembly, part of the 30S ribosomal subunit. Forms a loose heterodimer with protein S19. Forms two bridges to the 50S subunit in the 70S ribosome.

Functionally, located at the top of the head of the 30S subunit, it contacts several helices of the 16S rRNA. In the 70S ribosome it contacts the 23S rRNA (bridge B1a) and protein L5 of the 50S subunit (bridge B1b), connecting the 2 subunits; these bridges are implicated in subunit movement. This is Small ribosomal subunit protein uS13 from Methanothermobacter thermautotrophicus (strain ATCC 29096 / DSM 1053 / JCM 10044 / NBRC 100330 / Delta H) (Methanobacterium thermoautotrophicum).